The sequence spans 269 residues: HTH-type transcriptional activator ArnR (269 aa).

Residues 1 to 218 (MTKSLFDVLK…LLRLTNSYTL (218 aa)) are Cytoplasmic-facing. A DNA-binding region (H-T-H motif) is located at residues 39–62 (TTEISQTINTSRKSIIDAIRKLVD). The helical transmembrane segment at 219–239 (EMANVKVMGFILISLPLLMYF) threads the bilayer. Residues 240 to 242 (RDQ) lie on the Extracellular side of the membrane. Residues 243–263 (LGLIELPWLYAVIFLALLSVF) form a helical membrane-spanning segment. Residues 264-269 (AQILSR) are Cytoplasmic-facing.

It localises to the cell membrane. Its function is as follows. Involved in regulation of archaellar gene expression. Activates flaB transcription upon nutrient starvation by acting on the flaB promoter. This is HTH-type transcriptional activator ArnR from Sulfolobus acidocaldarius (strain ATCC 33909 / DSM 639 / JCM 8929 / NBRC 15157 / NCIMB 11770).